Reading from the N-terminus, the 188-residue chain is Probable RNA-binding protein 18 (188 aa).

Residues 23 to 104 (HRLWIGNIDP…KKLVVRWAHA (82 aa)) form the RRM domain. The interval 151-188 (EENPDDYSGPSAYTYNKPPDKREKRSQPYHKHFRKHRR) is disordered. Residues 177 to 188 (QPYHKHFRKHRR) are compositionally biased toward basic residues.

The chain is Probable RNA-binding protein 18 (rbm18) from Danio rerio (Zebrafish).